The sequence spans 414 residues: Nuclear pore complex-interacting protein family member B7 (414 aa).

An N-terminal signal peptide occupies residues 1 to 18 (MRLRFWLLIWLLLGFISH). Asn-111 carries N-linked (GlcNAc...) asparagine glycosylation. 2 disordered regions span residues 242–262 (RMGR…NSLS) and 335–402 (SPLP…LRTR). Positions 252-262 (QQHSITDNSLS) are enriched in polar residues. A compositionally biased stretch (basic and acidic residues) spans 356–384 (EVEKPPKPKRWRVDEVEQSPKPKRQREAE). Over residues 390 to 402 (KPKRRRLSKLRTR) the composition is skewed to basic residues.

This sequence belongs to the NPIP family.

Its subcellular location is the secreted. The polypeptide is Nuclear pore complex-interacting protein family member B7 (NPIPB7) (Homo sapiens (Human)).